The following is a 358-amino-acid chain: Ribosomal RNA large subunit methyltransferase M (358 aa).

S-adenosyl-L-methionine contacts are provided by residues Ser-191, Ala-224–Gly-227, Asp-243, Asp-263, and Asp-279. The active-site Proton acceptor is Lys-308.

It belongs to the class I-like SAM-binding methyltransferase superfamily. RNA methyltransferase RlmE family. RlmM subfamily. Monomer.

The protein localises to the cytoplasm. It catalyses the reaction cytidine(2498) in 23S rRNA + S-adenosyl-L-methionine = 2'-O-methylcytidine(2498) in 23S rRNA + S-adenosyl-L-homocysteine + H(+). In terms of biological role, catalyzes the 2'-O-methylation at nucleotide C2498 in 23S rRNA. The chain is Ribosomal RNA large subunit methyltransferase M from Marinobacter nauticus (strain ATCC 700491 / DSM 11845 / VT8) (Marinobacter aquaeolei).